A 344-amino-acid polypeptide reads, in one-letter code: MLNALYPLVRPALFSMDAEDAHHFTLNNLLRAHRMGLAGCIGNRIADDPRTVMGVRFPNPVGLAAGLDKDGAYIDGLAAFGFGFIEVGTVTPRAQPGNPRPRMFRLPQADALINRMGFNNGGVDAFVANVRASRWKAEGGVLGLNIGKNADTPIERANDDYLYCLERVYPHASYVTVNISSPNTKNLRQLQGASELDSLLSTLKDAQQRLADQHKRYVPLALKIAPDLDADQIGNIGDALVRHKIDGVIATNTTISREAVKGLPHAEEAGGLSGRPVFEASTRVVRALHGVVGDAVPIIGVGGIFGGADARAKIDAGAKLVQVYSGLIYRGPALVRECAAALRG.

Residues 65 to 69 (AGLDK) and Thr-89 each bind FMN. Lys-69 is a binding site for substrate. 114 to 118 (NRMGF) provides a ligand contact to substrate. Residues Asn-145 and Asn-178 each coordinate FMN. A substrate-binding site is contributed by Asn-178. The active-site Nucleophile is the Ser-181. Asn-183 lines the substrate pocket. FMN is bound by residues Lys-223 and Thr-251. Residue 252-253 (NT) participates in substrate binding. FMN is bound by residues Gly-274, Gly-303, and 324 to 325 (YS).

This sequence belongs to the dihydroorotate dehydrogenase family. Type 2 subfamily. Monomer. It depends on FMN as a cofactor.

It is found in the cell membrane. It catalyses the reaction (S)-dihydroorotate + a quinone = orotate + a quinol. It participates in pyrimidine metabolism; UMP biosynthesis via de novo pathway; orotate from (S)-dihydroorotate (quinone route): step 1/1. Functionally, catalyzes the conversion of dihydroorotate to orotate with quinone as electron acceptor. This chain is Dihydroorotate dehydrogenase (quinone), found in Cupriavidus necator (strain ATCC 17699 / DSM 428 / KCTC 22496 / NCIMB 10442 / H16 / Stanier 337) (Ralstonia eutropha).